The sequence spans 417 residues: Serine hydroxymethyltransferase (417 aa).

Residues Leu121 and 125–127 (GHL) each bind (6S)-5,6,7,8-tetrahydrofolate. Lys229 carries the N6-(pyridoxal phosphate)lysine modification. Position 355–357 (355–357 (SPF)) interacts with (6S)-5,6,7,8-tetrahydrofolate.

Belongs to the SHMT family. Homodimer. Pyridoxal 5'-phosphate is required as a cofactor.

It localises to the cytoplasm. It carries out the reaction (6R)-5,10-methylene-5,6,7,8-tetrahydrofolate + glycine + H2O = (6S)-5,6,7,8-tetrahydrofolate + L-serine. The protein operates within one-carbon metabolism; tetrahydrofolate interconversion. Its pathway is amino-acid biosynthesis; glycine biosynthesis; glycine from L-serine: step 1/1. Its function is as follows. Catalyzes the reversible interconversion of serine and glycine with tetrahydrofolate (THF) serving as the one-carbon carrier. This reaction serves as the major source of one-carbon groups required for the biosynthesis of purines, thymidylate, methionine, and other important biomolecules. Also exhibits THF-independent aldolase activity toward beta-hydroxyamino acids, producing glycine and aldehydes, via a retro-aldol mechanism. The sequence is that of Serine hydroxymethyltransferase from Buchnera aphidicola subsp. Acyrthosiphon pisum (strain APS) (Acyrthosiphon pisum symbiotic bacterium).